The sequence spans 278 residues: Betaine--homocysteine S-methyltransferase 1 (278 aa).

One can recognise a Hcy-binding domain in the interval 11-278; sequence KGILERLNSG…FGLEPRVATR (268 aa). 3 positions are modified to N6-succinyllysine: Lys40, Lys93, and Lys98. Cys217 serves as a coordination point for Zn(2+). An N6-succinyllysine mark is found at Lys232 and Lys241.

Homotetramer. Requires Zn(2+) as cofactor. In terms of tissue distribution, found exclusively in liver and kidney.

It is found in the cytoplasm. The protein localises to the cytosol. The protein resides in the nucleus. It catalyses the reaction L-homocysteine + glycine betaine = N,N-dimethylglycine + L-methionine. The protein operates within amine and polyamine degradation; betaine degradation; sarcosine from betaine: step 1/2. Its pathway is amino-acid biosynthesis; L-methionine biosynthesis via de novo pathway; L-methionine from L-homocysteine (BhmT route): step 1/1. Its activity is regulated as follows. Inhibited by dimethylglycine and methylthioacetate. In terms of biological role, involved in the regulation of homocysteine metabolism. Converts betaine and homocysteine to dimethylglycine and methionine, respectively. This reaction is also required for the irreversible oxidation of choline. The polypeptide is Betaine--homocysteine S-methyltransferase 1 (Sus scrofa (Pig)).